The sequence spans 688 residues: Pentatricopeptide repeat-containing protein At3g18020 (688 aa).

PPR repeat units lie at residues 53–88 (DRAY…GYRP), 89–123 (DSLN…GFIP), 124–158 (DERT…KKEF), 161–195 (SLTN…GHLP), 196–230 (DVVT…GIRP), 231–261 (NSLT…LWEY), 271–305 (KAAA…ESVN), 306–340 (VEFA…GLKP), 341–375 (RRTS…EFFP), 376–406 (SEYT…MLRK), 411–445 (RTRI…DCRP), 446–480 (DEYT…KFCA), 482–517 (DAVT…KIKP), 518–552 (GVVA…SVTA), 553–583 (DSTT…VIWP), 588–622 (DAFV…GAIP), and 623–657 (NVVC…GQAP).

The protein belongs to the PPR family. P subfamily.

This Arabidopsis thaliana (Mouse-ear cress) protein is Pentatricopeptide repeat-containing protein At3g18020.